The primary structure comprises 343 residues: Calcium/calmodulin-dependent protein kinase type 1B (343 aa).

One can recognise a Protein kinase domain in the interval 15-270; the sequence is YEIRERLGSG…CQQALRHLWI (256 aa). ATP contacts are provided by residues 21–29 and K44; that span reads LGSGAFSEV. Catalysis depends on D136, which acts as the Proton acceptor. The calmodulin-binding stretch occupies residues 290 to 311; it reads KNFARTHWKRAFNATSFLRHIR. The segment at 319 to 343 is disordered; sequence GEGASEQGMARHSHSGLRAGQPPKW.

This sequence belongs to the protein kinase superfamily. CAMK Ser/Thr protein kinase family. CaMK subfamily. In terms of processing, phosphorylated by CAMKK1.

It localises to the cytoplasm. It is found in the nucleus. It carries out the reaction L-seryl-[protein] + ATP = O-phospho-L-seryl-[protein] + ADP + H(+). The catalysed reaction is L-threonyl-[protein] + ATP = O-phospho-L-threonyl-[protein] + ADP + H(+). Its activity is regulated as follows. Activated by Ca(2+)/calmodulin. In terms of biological role, calcium/calmodulin-dependent protein kinase belonging to a proposed calcium-triggered signaling cascade. In vitro phosphorylates CREB1 and SYN1/synapsin I. Phosphorylates and activates CAMK1. The sequence is that of Calcium/calmodulin-dependent protein kinase type 1B (PNCK) from Homo sapiens (Human).